The sequence spans 487 residues: Argininosuccinate lyase (487 aa).

It belongs to the lyase 1 family. Argininosuccinate lyase subfamily.

It is found in the cytoplasm. The enzyme catalyses 2-(N(omega)-L-arginino)succinate = fumarate + L-arginine. It functions in the pathway amino-acid biosynthesis; L-arginine biosynthesis; L-arginine from L-ornithine and carbamoyl phosphate: step 3/3. This chain is Argininosuccinate lyase, found in Natranaerobius thermophilus (strain ATCC BAA-1301 / DSM 18059 / JW/NM-WN-LF).